We begin with the raw amino-acid sequence, 34 residues long: uncharacterized protein (34 aa).

This is an uncharacterized protein from Rhizobium radiobacter (Agrobacterium tumefaciens).